The sequence spans 696 residues: Transcriptional regulatory protein pro1 (696 aa).

Residues 1–48 (MSTQSPNHHEDITKTSSVNMTTTTTTTKTKAAAKAGTNAAPKQKTQMH) are disordered. The span at 21–40 (TTTTTTTKTKAAAKAGTNAA) shows a compositional bias: low complexity. Residues 55–82 (CYTCRLRRKKCDEGSPMCTACKHLGLCC) constitute a DNA-binding region (zn(2)-C6 fungal-type). A disordered region spans residues 112–145 (LSEKSSHTIQTSINTPPGLSHSLPTSATFSDPLD). Polar residues predominate over residues 118–140 (HTIQTSINTPPGLSHSLPTSATF).

The protein localises to the nucleus. May be involved in fruiting body development. The protein is Transcriptional regulatory protein pro1 (adv-1) of Neurospora crassa (strain ATCC 24698 / 74-OR23-1A / CBS 708.71 / DSM 1257 / FGSC 987).